The following is a 648-amino-acid chain: Nucleoside triphosphatase I (648 aa).

In terms of domain architecture, Helicase ATP-binding spans 48-213 (FIGLKNLNSM…NNLIGLLRPN (166 aa)). Residue 61–68 (WDTGTGKT) participates in ATP binding. A DEXH box motif is present at residues 151-154 (DEVH). The 164-residue stretch at 379–542 (YIEACRIILN…KINVVFDLLK (164 aa)) folds into the Helicase C-terminal domain. The segment at 468 to 534 (DIIILDMPWN…DIIKNKQGKI (67 aa)) is binding to the cap-specific mRNA (nucleoside-2'-O-)-methyltransferase.

The protein belongs to the helicase family. NPH I subfamily. As to quaternary structure, monomer. Interacts (via C-terminus) with RAP94 (via N-terminus). Interacts with the cap-specific mRNA (nucleoside-2'-O-)-methyltransferase.

The protein localises to the virion. The enzyme catalyses a ribonucleoside 5'-triphosphate + H2O = a ribonucleoside 5'-diphosphate + phosphate + H(+). Its function is as follows. DNA-dependent ATPase required for providing the needed energy to achieve the termination of early transcripts. Acts in concert with the RAP94 subunit of the virion RNA polymerase and the capping enzyme/VTF to catalyze release of UUUUUNU-containing nascent RNA from the elongation complex. NPH-I must bind ssDNA in order to exhibit ATPase activity. The protein is Nucleoside triphosphatase I (NPH1) of Choristoneura fumiferana (Spruce budworm moth).